We begin with the raw amino-acid sequence, 170 residues long: Crossover junction endodeoxyribonuclease RuvC (170 aa).

Active-site residues include Asp-9, Glu-70, and Asp-145. Residues Asp-9, Glu-70, and Asp-145 each coordinate Mg(2+).

The protein belongs to the RuvC family. As to quaternary structure, homodimer which binds Holliday junction (HJ) DNA. The HJ becomes 2-fold symmetrical on binding to RuvC with unstacked arms; it has a different conformation from HJ DNA in complex with RuvA. In the full resolvosome a probable DNA-RuvA(4)-RuvB(12)-RuvC(2) complex forms which resolves the HJ. The cofactor is Mg(2+).

It localises to the cytoplasm. It carries out the reaction Endonucleolytic cleavage at a junction such as a reciprocal single-stranded crossover between two homologous DNA duplexes (Holliday junction).. The RuvA-RuvB-RuvC complex processes Holliday junction (HJ) DNA during genetic recombination and DNA repair. Endonuclease that resolves HJ intermediates. Cleaves cruciform DNA by making single-stranded nicks across the HJ at symmetrical positions within the homologous arms, yielding a 5'-phosphate and a 3'-hydroxyl group; requires a central core of homology in the junction. The consensus cleavage sequence is 5'-(A/T)TT(C/G)-3'. Cleavage occurs on the 3'-side of the TT dinucleotide at the point of strand exchange. HJ branch migration catalyzed by RuvA-RuvB allows RuvC to scan DNA until it finds its consensus sequence, where it cleaves and resolves the cruciform DNA. This Chlamydia trachomatis serovar L2 (strain ATCC VR-902B / DSM 19102 / 434/Bu) protein is Crossover junction endodeoxyribonuclease RuvC.